The sequence spans 375 residues: Growth/differentiation factor 8 (375 aa).

A signal peptide spans 1–23 (MQKLQLCVYIYLFMLIVAGPVDL). Positions 24-266 (NENSEQKENV…VTDTPKRSRR (243 aa)) are excised as a propeptide. An N-linked (GlcNAc...) asparagine glycan is attached at Asn-71. 4 disulfide bridges follow: Cys-272–Cys-282, Cys-281–Cys-340, Cys-309–Cys-372, and Cys-313–Cys-374.

It belongs to the TGF-beta family. Homodimer; disulfide-linked. Interacts with WFIKKN2, leading to inhibit its activity. Interacts with FST3. Synthesized as large precursor molecule that undergoes proteolytic cleavage to generate an N-terminal propeptide and a disulfide linked C-terminal dimer, which is the biologically active molecule. The circulating form consists of a latent complex of the C-terminal dimer and other proteins, including its propeptide, which maintain the C-terminal dimer in a latent, inactive state. Ligand activation requires additional cleavage of the prodomain by a tolloid-like metalloproteinase.

The protein localises to the secreted. In terms of biological role, acts specifically as a negative regulator of skeletal muscle growth. This chain is Growth/differentiation factor 8 (MSTN), found in Homo sapiens (Human).